Here is a 273-residue protein sequence, read N- to C-terminus: NAD-dependent protein deacylase (273 aa).

The Deacetylase sirtuin-type domain maps to 20-272 (RERLRQRIFF…PEFVDKFLKG (253 aa)). 48 to 67 (GAGISAESGIRTFRAADGLW) lines the NAD(+) pocket. Residues Y92 and R95 each coordinate substrate. NAD(+) is bound at residue 129–132 (QNID). Catalysis depends on H147, which acts as the Proton acceptor. Zn(2+) is bound by residues C155 and C174. NAD(+) is bound by residues 214 to 216 (GTS), 240 to 242 (NLE), and A258.

The protein belongs to the sirtuin family. Class III subfamily. Zn(2+) serves as cofactor.

It is found in the cytoplasm. It catalyses the reaction N(6)-acetyl-L-lysyl-[protein] + NAD(+) + H2O = 2''-O-acetyl-ADP-D-ribose + nicotinamide + L-lysyl-[protein]. The enzyme catalyses N(6)-succinyl-L-lysyl-[protein] + NAD(+) + H2O = 2''-O-succinyl-ADP-D-ribose + nicotinamide + L-lysyl-[protein]. It carries out the reaction N(6)-(2-hydroxyisobutanoyl)-L-lysyl-[protein] + NAD(+) + H2O = 2''-O-(2-hydroxyisobutanoyl)-ADP-D-ribose + nicotinamide + L-lysyl-[protein]. Its function is as follows. NAD-dependent lysine deacetylase that specifically removes acetyl groups on target proteins. Also acts as a protein-lysine deacylase by mediating protein desuccinylation and de-2-hydroxyisobutyrylation. Modulates the activities of several proteins which are inactive in their acylated form. The sequence is that of NAD-dependent protein deacylase from Salmonella typhi.